We begin with the raw amino-acid sequence, 673 residues long: Pesticin receptor (673 aa).

The first 22 residues, 1–22, serve as a signal peptide directing secretion; sequence MKMTRLYPLALGGLLLPAIANA. The short motif at 30-37 is the TonB box element; it reads STLEVTAS. The TBDR plug domain occupies 41 to 155; sequence SRSASANNVS…QGGIINIVTQ (115 aa). Residues 160 to 672 form the TBDR beta-barrel domain; sequence TPRGYIEGGV…TVGINTRIDF (513 aa). Positions 657–673 match the TonB C-terminal box motif; sequence QVNMGRTVGINTRIDFF.

It belongs to the TonB-dependent receptor family.

The protein resides in the cell outer membrane. In terms of biological role, receptor for the bacteriocin pesticin and for the siderophore yersiniabactin. The sequence is that of Pesticin receptor (fyuA) from Yersinia enterocolitica serotype O:8 / biotype 1B (strain NCTC 13174 / 8081).